A 109-amino-acid chain; its full sequence is Large ribosomal subunit protein uL22 (109 aa).

It belongs to the universal ribosomal protein uL22 family. As to quaternary structure, part of the 50S ribosomal subunit.

This protein binds specifically to 23S rRNA; its binding is stimulated by other ribosomal proteins, e.g. L4, L17, and L20. It is important during the early stages of 50S assembly. It makes multiple contacts with different domains of the 23S rRNA in the assembled 50S subunit and ribosome. In terms of biological role, the globular domain of the protein is located near the polypeptide exit tunnel on the outside of the subunit, while an extended beta-hairpin is found that lines the wall of the exit tunnel in the center of the 70S ribosome. The polypeptide is Large ribosomal subunit protein uL22 (Polaromonas sp. (strain JS666 / ATCC BAA-500)).